The sequence spans 403 residues: Heptahelical transmembrane protein ADIPOR3 (403 aa).

The Cytoplasmic segment spans residues 1–73 (MAAAAGEEVE…LSAFSIHNET (73 aa)). The chain crosses the membrane as a helical span at residues 74–94 (LNVWTHLIGFFIFLVLTIYTA). The Extracellular portion of the chain corresponds to 95-209 (TQVPNVVDLQ…QLIRPIPRWP (115 aa)). The chain crosses the membrane as a helical span at residues 210 to 230 (FYAFLGGAMFCLLASSTCHLL). Over 231-246 (SCHSRRLAYIMLRLDY) the chain is Cytoplasmic. The chain crosses the membrane as a helical span at residues 247-267 (AGIAALIATSFYPPVYYSFMC). The Extracellular segment spans residues 268 to 274 (YPFFCNL). A helical transmembrane segment spans residues 275–295 (YLSCITILGVATIAFSLLPVF). Over 296 to 306 (QNPEFRTIRAC) the chain is Cytoplasmic. Residues 307-327 (LFFGMGASGVIPVIHKLILFW) traverse the membrane as a helical segment. Residues 328-331 (HQPE) lie on the Extracellular side of the membrane. The helical transmembrane segment at 332–352 (ALHTTAYEVLMGLFYGIGALV) threads the bilayer. Residues 353–374 (YATRVPERWMPGKFDIAGHSHQ) are Cytoplasmic-facing. The helical transmembrane segment at 375-395 (LFHVLVVAGAYTHYHSGLVYL) threads the bilayer. Residues 396–403 (KWRDVQGC) are Extracellular-facing.

This sequence belongs to the ADIPOR family.

The protein resides in the membrane. Functionally, may play a role in abiotic stress response. This chain is Heptahelical transmembrane protein ADIPOR3 (ADIPOR3), found in Oryza sativa subsp. japonica (Rice).